The primary structure comprises 238 residues: Ubiquinone biosynthesis O-methyltransferase (238 aa).

Residues Arg40, Gly59, Asp81, and Met126 each coordinate S-adenosyl-L-methionine.

This sequence belongs to the methyltransferase superfamily. UbiG/COQ3 family.

It catalyses the reaction a 3-demethylubiquinol + S-adenosyl-L-methionine = a ubiquinol + S-adenosyl-L-homocysteine + H(+). It carries out the reaction a 3-(all-trans-polyprenyl)benzene-1,2-diol + S-adenosyl-L-methionine = a 2-methoxy-6-(all-trans-polyprenyl)phenol + S-adenosyl-L-homocysteine + H(+). It participates in cofactor biosynthesis; ubiquinone biosynthesis. Its function is as follows. O-methyltransferase that catalyzes the 2 O-methylation steps in the ubiquinone biosynthetic pathway. The sequence is that of Ubiquinone biosynthesis O-methyltransferase from Neisseria meningitidis serogroup A / serotype 4A (strain DSM 15465 / Z2491).